The following is a 2201-amino-acid chain: MGAQVSTQKTGAHETSLSAAGNSIIHYTNINYYKDAASNSANRQDFTQDPSKFTEPVKDVMIKSLPALNSPTVEECGYSDRVRSITLGNSTITTQECANVVVGYGRWPTYLRDDEATAEDQPTQPDVATCRFYTLDSIKWEKGSVGWWWKFPEALSDMGLFGQNMQYHYLGRAGYTIHLQCNASKFHQGCLLVVCVPEAEMGGAVVGQAFSATAMANGDKAYEFTSATQSDQTKVQTAIHNAGMGVGVGNLTIYPHQWINLRTNNSATIVMPYINSVPMDNMFRHYNFTLMVIPFVKLDYADTASTYVPITVTVAPMCAEYNGLRLAQAQGLPTMNTPGSTQFLTSDDFQSPCALPQFDVTPSMNIPGEVKNLMEIAEVDSVVPVNNVQDTTDQMEMFRIPVTINAPLQQQVFGLRLQPGLDSVFKHTLLGEILNYYAHWSGSMKLTFVFCGSAMATGKFLIAYSPPGANPPKTRKDAMLGTHIIWDIGLQSSCVLCVPWISQTHYRLVQQDEYTSAGYVTCWYQTGMIVPPGTPNSSSIMCFASACNDFSVRMLRDTPFISQDNKLQGDVEEAIERARCTVADTMRTGPSNSASVPALTAVETGHTSQVTPSDTMQTRHVKNYHSRSESTVENFLGRSACVYMEEYKTTDKHVNKKFVAWPINTKQMVQMRRKLEMFTYLRFDMEVTFVITSRQDPGTTLAQDMPVLTRQIMYVPPGGPIPAKVDDYAWQTSTNPSIFWTEGNAPARMSIPFISIGNAYSNFYDGWSNFDQRGSYGYNTLNNLGHIYVRHVSGSSPHPITSTIRVYFKPKHTRAWVPRPPRLCQYKKAFSVDFTPTPITDTRKDINTVTTVAQSRRRGDMSTLNTHGAFGQQSGAVYVGNYRVINRHLATHTDWQNCVWEDYNRDLLVSTTTAHGCDVIARCQCTTGVYFCASKNKHYPVSFEGPGLVEVQESEYYPKRYQSHVLLAAGFSEPGDCGGILRCEHGVIGIVTMGGEGVVGFADVRDLLWLEDDAMEQGVKDYVEQLGNAFGSGFTNQICEQVNLLKESLVGQDSILEKSLKALVKIISALVIVVRNHDDLITVTAILALIGCTSSPWRWLKQKVSQYYGIPMAERQNDSWLKKFTEMTNACKRMEWIAIKIQKFIEWLKVKILPEVREKHEFLNRLKQLPLLESQIATIEQSAPSQSDQEQLFSNVQYFAHYCRKYAPLYAAEAKRVFSLEKKMSNYIQFKSKCRIEPVCLLLHGSPGAGKSVATNLIGRSLAEKLNSSVYSLPPDPDHFDGYKQQAVVIMDDLCQNPDGKDVSLFCQMVSSVDFVPPMAALEEKGILFTSPFVLASTNAGSINAPTVSDSRALARRFHFDMNIEVISMYSQNGKINMPMSVKTCDEECCPVNFKKCCPLVCGKAIQFIDRRTQVRYSLDMLVTEMFREYNHRHSVGATLEALFQGPPIYREIKISVAPETPPPPVIADLLKSVDSEDVREYCKEKGWLIPEVNSTLQIEKYVSRAFICLQAITTFVSVAGIIYIIYKLFAGFQGAYTGIPNQKPKVPTLRQAKVQGPAFEFAVAMMKRNSSTVKTEYGEFTMLGIYDRWAVLPRHAKPGPTILMNDQEVGVMDAKELVDKDGTNLELTLLKLNRNEKFRDIRGFLAKEEMEVNEAVLAINTSKFPNMYIPVGQVTDYGFLNLGGTPTKRMLMYNFPTRAGQCGGVLMSTGKVLGIHVGGNGHQGFSAALLKHYFNDEQGEIEFIESSKDAGFPIINTPSKTKLEPSVFHQVFEGVKEPAVLRNGDPRLKANFEEAIFSKYIGNVNTHVDEYMLEAVDHYAGQLATLDISTEPMKLEDAVYGTEGLEALDLTTSAGYPYVALGIKKRDILSKKTRDLTKLKECMDKYGLNLPMITYVKDQLRSAEKVAKGKSRLIEASSLNDSVAMRQTFGNLYKTFHLNPGIVTGSAVGCDPDLFWSKIPVMLNGHLIAFDYSGYDASLSPVWFACLKLLLEKLGYSHKETNYIDYLCNSHHLYRDKHYFVRGGMPSGCSGTSIFNSMINNIIIRTLMLKVYKGIDLDQFRMIAYGDDVIASYPWPIDASLLAEAGKDYGLIMTPADKGECFNEVTWTNVTFLKRYFRADEQYPFLVHPVMPMKDIHESIRWTKDPKNTQDHVRSLCLLAWHNGEHEYEEFIRKIRSVPVGRCLTLPAFSTLRRKWLDSF.

A lipid anchor (N-myristoyl glycine; by host) is attached at glycine 2. Residues 2–1511 (GAQVSTQKTG…YVSRAFICLQ (1510 aa)) lie on the Cytoplasmic side of the membrane. The tract at residues 566–582 (KLQGDVEEAIERARCTV) is amphipathic alpha-helix. The Cell attachment site signature appears at 858-860 (RGD). Catalysis depends on for protease 2A activity residues histidine 888 and aspartate 906. Zn(2+) contacts are provided by cysteine 923 and cysteine 925. The active-site For protease 2A activity is the cysteine 977. Zn(2+) contacts are provided by cysteine 983 and histidine 985. Positions 1117–1189 (NDSWLKKFTE…EQSAPSQSDQ (73 aa)) are membrane-binding. Residues 1117 to 1255 (NDSWLKKFTE…SPGAGKSVAT (139 aa)) form an oligomerization region. The interval 1138-1142 (AIKIQ) is RNA-binding. One can recognise an SF3 helicase domain in the interval 1221-1377 (EKKMSNYIQF…SMYSQNGKIN (157 aa)). Zn(2+) is bound by residues cysteine 1385, cysteine 1397, and cysteine 1402. A C4-type; degenerate zinc finger spans residues 1385–1402 (CDEECCPVNFKKCCPLVC). The interval 1429–1436 (EYNHRHSV) is RNA-binding. Residues 1440–1445 (LEALFQ) are oligomerization. Residues 1512–1527 (AITTFVSVAGIIYIIY) lie within the membrane without spanning it. The Cytoplasmic portion of the chain corresponds to 1528 to 2201 (KLFAGFQGAY…TLRRKWLDSF (674 aa)). Residue tyrosine 1537 is modified to O-(5'-phospho-RNA)-tyrosine. The Peptidase C3 domain maps to 1557–1735 (GPAFEFAVAM…FSAALLKHYF (179 aa)). Catalysis depends on for protease 3C activity residues histidine 1596, glutamate 1627, and cysteine 1703. Positions 1966–2082 (GHLIAFDYSG…SYPWPIDASL (117 aa)) constitute a RdRp catalytic domain. Aspartate 1972 and aspartate 2068 together coordinate Mg(2+).

This sequence belongs to the picornaviruses polyprotein family. Interacts with capsid protein VP1 and capsid protein VP3 to form heterotrimeric protomers. In terms of assembly, interacts with capsid protein VP0, and capsid protein VP3 to form heterotrimeric protomers. Five protomers subsequently associate to form pentamers which serve as building blocks for the capsid. Interacts with capsid protein VP2, capsid protein VP3 and capsid protein VP4 following cleavage of capsid protein VP0. Interacts with host integrin heterodimer ITGAV/ITGB6. As to quaternary structure, interacts with capsid protein VP1 and capsid protein VP3 in the mature capsid. Interacts with capsid protein VP0 and capsid protein VP1 to form heterotrimeric protomers. Five protomers subsequently associate to form pentamers which serve as building blocks for the capsid. Interacts with capsid protein VP4 in the mature capsid. Interacts with protein 2C; this interaction may be important for virion morphogenesis. In terms of assembly, interacts with capsid protein VP1 and capsid protein VP3. As to quaternary structure, homodimer. Homohexamer; forms a hexameric ring structure with 6-fold symmetry characteristic of AAA+ ATPases. Interacts (via N-terminus) with host RTN3 (via reticulon domain); this interaction is important for viral replication. Interacts with capsid protein VP3; this interaction may be important for virion morphogenesis. In terms of assembly, interacts with protein 3CD. As to quaternary structure, homodimer. Interacts with host GBF1. Interacts (via GOLD domain) with host ACBD3 (via GOLD domain); this interaction allows the formation of a viral protein 3A/ACBD3 heterotetramer with a 2:2 stoichiometry, which will stimulate the recruitment of host PI4KB in order to synthesize PI4P at the viral RNA replication sites. Interacts with RNA-directed RNA polymerase. In terms of assembly, interacts with protein 3AB and with RNA-directed RNA polymerase. As to quaternary structure, interacts with Viral protein genome-linked and with protein 3CD. It depends on Mg(2+) as a cofactor. In terms of processing, specific enzymatic cleavages in vivo by the viral proteases yield processing intermediates and the mature proteins. Myristoylation is required for the formation of pentamers during virus assembly. Further assembly of 12 pentamers and a molecule of genomic RNA generates the provirion. Post-translationally, during virion maturation, immature virions are rendered infectious following cleavage of VP0 into VP4 and VP2. This maturation seems to be an autocatalytic event triggered by the presence of RNA in the capsid and it is followed by a conformational change infectious virion. In terms of processing, myristoylation is required during RNA encapsidation and formation of the mature virus particle. VPg is uridylylated by the polymerase into VPg-pUpU. This acts as a nucleotide-peptide primer for the genomic RNA replication.

It is found in the virion. The protein localises to the host cytoplasm. Its subcellular location is the host cytoplasmic vesicle membrane. The protein resides in the host nucleus. It catalyses the reaction a ribonucleoside 5'-triphosphate + H2O = a ribonucleoside 5'-diphosphate + phosphate + H(+). The catalysed reaction is Selective cleavage of Tyr-|-Gly bond in the picornavirus polyprotein.. The enzyme catalyses RNA(n) + a ribonucleoside 5'-triphosphate = RNA(n+1) + diphosphate. It carries out the reaction Selective cleavage of Gln-|-Gly bond in the poliovirus polyprotein. In other picornavirus reactions Glu may be substituted for Gln, and Ser or Thr for Gly.. Replication or transcription is subject to high level of random mutations by the nucleotide analog ribavirin. Functionally, forms an icosahedral capsid of pseudo T=3 symmetry with capsid proteins VP2 and VP3. The capsid is 300 Angstroms in diameter, composed of 60 copies of each capsid protein and enclosing the viral positive strand RNA genome. Capsid protein VP1 mainly forms the vertices of the capsid. Capsid protein VP1 interacts with host integrin ITGAV/ITGB6 to provide virion attachment to target host cells. This attachment induces virion internalization. Tyrosine kinases are probably involved in the entry process. After binding to its receptor, the capsid undergoes conformational changes. Capsid protein VP1 N-terminus (that contains an amphipathic alpha-helix) and capsid protein VP4 are externalized. Together, they shape a pore in the host membrane through which viral genome is translocated to host cell cytoplasm. In terms of biological role, forms an icosahedral capsid of pseudo T=3 symmetry with capsid proteins VP2 and VP3. The capsid is 300 Angstroms in diameter, composed of 60 copies of each capsid protein and enclosing the viral positive strand RNA genome. Lies on the inner surface of the capsid shell. After binding to the host receptor, the capsid undergoes conformational changes. Capsid protein VP4 is released, Capsid protein VP1 N-terminus is externalized, and together, they shape a pore in the host membrane through which the viral genome is translocated into the host cell cytoplasm. Its function is as follows. Component of immature procapsids, which is cleaved into capsid proteins VP4 and VP2 after maturation. Allows the capsid to remain inactive before the maturation step. Functionally, cysteine protease that cleaves viral polyprotein and specific host proteins. It is responsible for the autocatalytic cleavage between the P1 and P2 regions, which is the first cleavage occurring in the polyprotein. Also cleaves the host translation initiation factor EIF4G1, in order to shut down the capped cellular mRNA translation. Inhibits the host nucleus-cytoplasm protein and RNA trafficking by cleaving host members of the nuclear pores. Counteracts stress granule formation probably by antagonizing its assembly or promoting its dissassembly. Cleaves and inhibits host IFIH1/MDA5, thereby inhibiting the type-I IFN production and the establishment of the antiviral state. Cleaves and inhibits host MAVS, thereby inhibiting the type-I IFN production and the establishment of the antiviral state. In terms of biological role, plays an essential role in the virus replication cycle by acting as a viroporin. Creates a pore in the host endoplasmic reticulum and as a consequence releases Ca2+ in the cytoplasm of infected cell. In turn, high levels of cytoplasmic calcium may trigger membrane trafficking and transport of viral ER-associated proteins to viroplasms, sites of viral genome replication. Induces and associates with structural rearrangements of intracellular membranes. Displays RNA-binding, nucleotide binding and NTPase activities. May play a role in virion morphogenesis and viral RNA encapsidation by interacting with the capsid protein VP3. Its function is as follows. Localizes the viral replication complex to the surface of membranous vesicles. Together with protein 3CD binds the Cis-Active RNA Element (CRE) which is involved in RNA synthesis initiation. Acts as a cofactor to stimulate the activity of 3D polymerase, maybe through a nucleid acid chaperone activity. Functionally, localizes the viral replication complex to the surface of membranous vesicles. It inhibits host cell endoplasmic reticulum-to-Golgi apparatus transport and causes the disassembly of the Golgi complex, possibly through GBF1 interaction. This would result in depletion of MHC, trail receptors and IFN receptors at the host cell surface. Plays an essential role in viral RNA replication by recruiting ACBD3 and PI4KB at the viral replication sites, thereby allowing the formation of the rearranged membranous structures where viral replication takes place. In terms of biological role, acts as a primer for viral RNA replication and remains covalently bound to viral genomic RNA. VPg is uridylylated prior to priming replication into VPg-pUpU. The oriI viral genomic sequence may act as a template for this. The VPg-pUpU is then used as primer on the genomic RNA poly(A) by the RNA-dependent RNA polymerase to replicate the viral genome. During genome replication, the VPg-RNA linkage is removed by the host TDP2, thereby accelerating replication. During the late stage of the replication cycle, host TDP2 is excluded from sites of viral RNA synthesis and encapsidation, allowing for the generation of progeny virions. Involved in the viral replication complex and viral polypeptide maturation. It exhibits protease activity with a specificity and catalytic efficiency that is different from protease 3C. Protein 3CD lacks polymerase activity. Protein 3CD binds to the 5'UTR of the viral genome. Its function is as follows. Replicates the viral genomic RNA on the surface of intracellular membranes. May form linear arrays of subunits that propagate along a strong head-to-tail interaction called interface-I. Covalently attaches UMP to a tyrosine of VPg, which is used to prime RNA synthesis. The positive stranded RNA genome is first replicated at virus induced membranous vesicles, creating a dsRNA genomic replication form. This dsRNA is then used as template to synthesize positive stranded RNA genomes. ss(+)RNA genomes are either translated, replicated or encapsidated. Functionally, major viral protease that mediates proteolytic processing of the polyprotein. Cleaves host EIF5B, contributing to host translation shutoff. Also cleaves host PABPC1, contributing to host translation shutoff. Cleaves host NLRP1, triggers host N-glycine-mediated degradation of the autoinhibitory NLRP1 N-terminal fragment. This is Genome polyprotein from Coxsackievirus A9 (strain Griggs).